The following is a 448-amino-acid chain: Allantoinase (448 aa).

Histidine 60, histidine 62, lysine 147, histidine 183, histidine 239, and aspartate 312 together coordinate Zn(2+). Lysine 147 carries the N6-carboxylysine modification.

It belongs to the metallo-dependent hydrolases superfamily. Allantoinase family. In terms of assembly, homotetramer. Requires Zn(2+) as cofactor. In terms of processing, carboxylation allows a single lysine to coordinate two zinc ions.

It carries out the reaction (S)-allantoin + H2O = allantoate + H(+). Its pathway is nitrogen metabolism; (S)-allantoin degradation; allantoate from (S)-allantoin: step 1/1. Catalyzes the conversion of allantoin (5-ureidohydantoin) to allantoic acid by hydrolytic cleavage of the five-member hydantoin ring. The sequence is that of Allantoinase from Deinococcus radiodurans (strain ATCC 13939 / DSM 20539 / JCM 16871 / CCUG 27074 / LMG 4051 / NBRC 15346 / NCIMB 9279 / VKM B-1422 / R1).